Here is a 127-residue protein sequence, read N- to C-terminus: Aspartate 1-decarboxylase (127 aa).

The active-site Schiff-base intermediate with substrate; via pyruvic acid is the Ser25. Ser25 carries the pyruvic acid (Ser) modification. Thr57 provides a ligand contact to substrate. The active-site Proton donor is the Tyr58. 73–75 (GAA) is a binding site for substrate.

It belongs to the PanD family. As to quaternary structure, heterooctamer of four alpha and four beta subunits. Pyruvate is required as a cofactor. Is synthesized initially as an inactive proenzyme, which is activated by self-cleavage at a specific serine bond to produce a beta-subunit with a hydroxyl group at its C-terminus and an alpha-subunit with a pyruvoyl group at its N-terminus.

Its subcellular location is the cytoplasm. It catalyses the reaction L-aspartate + H(+) = beta-alanine + CO2. The protein operates within cofactor biosynthesis; (R)-pantothenate biosynthesis; beta-alanine from L-aspartate: step 1/1. Its function is as follows. Catalyzes the pyruvoyl-dependent decarboxylation of aspartate to produce beta-alanine. This Trichormus variabilis (strain ATCC 29413 / PCC 7937) (Anabaena variabilis) protein is Aspartate 1-decarboxylase.